A 160-amino-acid chain; its full sequence is Cytochrome b6-f complex subunit 4 (160 aa).

Helical transmembrane passes span L36–V56, L95–E115, and T131–I151.

Belongs to the cytochrome b family. PetD subfamily. As to quaternary structure, the 4 large subunits of the cytochrome b6-f complex are cytochrome b6, subunit IV (17 kDa polypeptide, petD), cytochrome f and the Rieske protein, while the 4 small subunits are petG, petL, petM and petN. The complex functions as a dimer.

The protein resides in the plastid. It is found in the chloroplast thylakoid membrane. In terms of biological role, component of the cytochrome b6-f complex, which mediates electron transfer between photosystem II (PSII) and photosystem I (PSI), cyclic electron flow around PSI, and state transitions. This Amborella trichopoda protein is Cytochrome b6-f complex subunit 4.